The following is a 62-amino-acid chain: Large ribosomal subunit protein bL33 (62 aa).

Belongs to the bacterial ribosomal protein bL33 family.

This is Large ribosomal subunit protein bL33 from Porphyromonas gingivalis (strain ATCC 33277 / DSM 20709 / CIP 103683 / JCM 12257 / NCTC 11834 / 2561).